Here is a 957-residue protein sequence, read N- to C-terminus: UvrABC system protein A (957 aa).

33 to 40 (GLSGSGKS) is an ATP binding site. The C4-type zinc-finger motif lies at 252 to 279 (CPHCGFSIGELEPRLFSFNSPFGACPTC). ABC transporter domains follow at residues 309 to 587 (WTPI…PNSL) and 607 to 935 (PDGR…RYLK). Residue 639-646 (GVSGSGKS) participates in ATP binding. A C4-type zinc finger spans residues 738-764 (CEACRGDGIIKIEMHFLPDVYVPCEVC).

This sequence belongs to the ABC transporter superfamily. UvrA family. Forms a heterotetramer with UvrB during the search for lesions.

It localises to the cytoplasm. The UvrABC repair system catalyzes the recognition and processing of DNA lesions. UvrA is an ATPase and a DNA-binding protein. A damage recognition complex composed of 2 UvrA and 2 UvrB subunits scans DNA for abnormalities. When the presence of a lesion has been verified by UvrB, the UvrA molecules dissociate. In Bacillus subtilis (strain 168), this protein is UvrABC system protein A.